A 164-amino-acid chain; its full sequence is CASP-like protein 1C2 (164 aa).

The Cytoplasmic portion of the chain corresponds to 1–8 (MAVELKKV). Residues 9 to 29 (FSTILRFLALAATVVAVIVMI) form a helical membrane-spanning segment. Residues 30–53 (RSHDSAIVLNLTFSAKYNNTPAFK) lie on the Extracellular side of the membrane. An N-linked (GlcNAc...) asparagine glycan is attached at Asn-39. Residues 54 to 74 (YFVIAEGIASVYTIIVIFLWS) traverse the membrane as a helical segment. Topologically, residues 75–80 (KGLLGR) are cytoplasmic. Residues 81-101 (LIVILDMVTTVLLTSSISAAL) traverse the membrane as a helical segment. At 102 to 129 (AIAQVGKKGNSHAGWLPVCGQVPKFCDQ) the chain is on the extracellular side. A helical transmembrane segment spans residues 130-150 (AIIALVAGFVAAIVYFMLLLC). The Cytoplasmic portion of the chain corresponds to 151 to 164 (SLHAVLTPIFAVKP).

Belongs to the Casparian strip membrane proteins (CASP) family. In terms of assembly, homodimer and heterodimers.

It is found in the cell membrane. The polypeptide is CASP-like protein 1C2 (Ricinus communis (Castor bean)).